Consider the following 540-residue polypeptide: Probable quinate permease (540 aa).

Residues 1–22 (MSILALVEDRPTPKEVYNWRIY) lie on the Cytoplasmic side of the membrane. The chain crosses the membrane as a helical span at residues 23 to 43 (LLAAVASFTSCMIGYDSAFIG). Over 44 to 74 (TTLALGSFREEFEFTTMEPAAVNRVSANIVS) the chain is Extracellular. A helical membrane pass occupies residues 75 to 95 (CYQAGAFFGAFFAYPIGHFWG). The Cytoplasmic portion of the chain corresponds to 96–97 (RK). Residues 98–118 (WGLLSAAAIFTLGAGLMLGAN) traverse the membrane as a helical segment. The Extracellular segment spans residues 119–130 (GDRGLGLIYGGR). The helical transmembrane segment at 131 to 151 (VLAGIGVGAGSNITPIYISEL) threads the bilayer. The Cytoplasmic portion of the chain corresponds to 152–157 (APPSIR). Residues 158–178 (GHLVGVYELGWQIGGLVGFWI) form a helical membrane-spanning segment. Residues 179–193 (NYGVSETLAPSHKQW) are Extracellular-facing. Residues 194–214 (IIPFAVQLIPSGLLLIGAVFL) form a helical membrane-spanning segment. The Cytoplasmic segment spans residues 215–285 (RESPRWLFSS…AGTNKKVMYR (71 aa)). A helical membrane pass occupies residues 286–306 (LFLGSMLFFWQNGSGINAINY). Over 307 to 325 (YSPTVFKSIGLRGTNTGMF) the chain is Extracellular. The chain crosses the membrane as a helical span at residues 326 to 346 (STGIFGVVKTVVTFIWLLYLI). Topologically, residues 347-352 (DRMGRR) are cytoplasmic. A helical transmembrane segment spans residues 353–373 (LLLLVGAAGASVCLWIVGAYI). The Extracellular portion of the chain corresponds to 374-387 (KIANPAKNGNGEMT). The helical transmembrane segment at 388 to 408 (GGGIAAMFFFYLYTVFYTPSW) threads the bilayer. Residues 409–456 (NGTPWVMNSEMFEPNMRSLAQACAAASNWLWNFLISRFTPQMFDKMGY) lie on the Cytoplasmic side of the membrane. A helical membrane pass occupies residues 457–477 (GVWFFFASLMLCSIVIVFFLI). The Extracellular portion of the chain corresponds to 478–540 (PETKGIPLES…RLESVQPKEA (63 aa)). The segment at 519–540 (IEESGYTKSGEQRLESVQPKEA) is disordered. Residues 528 to 540 (GEQRLESVQPKEA) are compositionally biased toward basic and acidic residues.

The protein belongs to the major facilitator superfamily. Sugar transporter (TC 2.A.1.1) family. In terms of assembly, interacts with creB. Post-translationally, ubiquitinated. Deubiquitinated by creB, probably to control its activity or amount.

It is found in the cell membrane. Its function is as follows. Integral membrane transporter that imports quinic acid to be catabolized as a carbon source. This is Probable quinate permease (qutD) from Aspergillus clavatus (strain ATCC 1007 / CBS 513.65 / DSM 816 / NCTC 3887 / NRRL 1 / QM 1276 / 107).